Reading from the N-terminus, the 251-residue chain is Imidazole glycerol phosphate synthase subunit HisF (251 aa).

Residues aspartate 11 and aspartate 130 contribute to the active site.

The protein belongs to the HisA/HisF family. In terms of assembly, heterodimer of HisH and HisF.

The protein localises to the cytoplasm. It carries out the reaction 5-[(5-phospho-1-deoxy-D-ribulos-1-ylimino)methylamino]-1-(5-phospho-beta-D-ribosyl)imidazole-4-carboxamide + L-glutamine = D-erythro-1-(imidazol-4-yl)glycerol 3-phosphate + 5-amino-1-(5-phospho-beta-D-ribosyl)imidazole-4-carboxamide + L-glutamate + H(+). It participates in amino-acid biosynthesis; L-histidine biosynthesis; L-histidine from 5-phospho-alpha-D-ribose 1-diphosphate: step 5/9. In terms of biological role, IGPS catalyzes the conversion of PRFAR and glutamine to IGP, AICAR and glutamate. The HisF subunit catalyzes the cyclization activity that produces IGP and AICAR from PRFAR using the ammonia provided by the HisH subunit. The protein is Imidazole glycerol phosphate synthase subunit HisF of Prosthecochloris aestuarii (strain DSM 271 / SK 413).